A 797-amino-acid chain; its full sequence is N-acetylneuraminate (7)9-O-acetyltransferase (797 aa).

The Cytoplasmic portion of the chain corresponds to 1–18 (MAALAYNLGKREINHYFS). The chain crosses the membrane as a helical span at residues 19 to 39 (VRSAKVLALVAVLLLAACHLA). The Lumenal segment spans residues 40–313 (SRRYRGNDSC…QPRPPVTLIQ (274 aa)). N-linked (GlcNAc...) asparagine glycosylation occurs at asparagine 46. Serine 94 acts as the Acyl-ester intermediate in catalysis. N-linked (GlcNAc...) asparagine glycans are attached at residues asparagine 175 and asparagine 187. Active-site residues include aspartate 270 and histidine 273. A helical transmembrane segment spans residues 314–334 (KLAACFFTLSIIGYLIFYIIH). The Cytoplasmic segment spans residues 335–363 (RNAHRKNKPCTDLESGEEKKNIINTPVSS). A helical transmembrane segment spans residues 364-384 (LEILLQSFCKLGLIMAYFYMC). The Lumenal portion of the chain corresponds to 385 to 395 (DRANLFMKENK). Residues 396–416 (FYTHSSFFIPIIYILVLGVFY) traverse the membrane as a helical segment. Residues 417-439 (NENTKETKVLNREQTDEWKGWMQ) are Cytoplasmic-facing. A helical transmembrane segment spans residues 440 to 460 (LVILIYHISGASTFLPVYMHI). Arginine 461 is a topological domain (lumenal). A helical membrane pass occupies residues 462-482 (VLVAAYLFQTGYGHFSYFWIK). At 483 to 486 (GDFG) the chain is on the cytoplasmic side. Residues 487–507 (IYRVCQVLFRLNFLVVVLCIV) traverse the membrane as a helical segment. Topologically, residues 508–513 (MDRPYQ) are lumenal. The helical transmembrane segment at 514–534 (FYYFVPLVTVWFMVIYVTLAL) threads the bilayer. Topologically, residues 535 to 547 (WPQIIQKKANGNC) are cytoplasmic. A helical transmembrane segment spans residues 548 to 568 (FWHFGLLLKLGFLLLFICFLA). Residues 569-605 (YSQGAFEKIFSLWPLSKCFELKGNVYEWWFRWRLDRY) are Lumenal-facing. The chain crosses the membrane as a helical span at residues 606-626 (VVFHGMLFAFIYLALQKRQIL). Residues 627 to 638 (SEGKGEPLFSNK) lie on the Cytoplasmic side of the membrane. A helical membrane pass occupies residues 639–659 (ISNFLLFISVVSFLTYSIWAS). Over 660 to 671 (SCKNKAECNELH) the chain is Lumenal. The helical transmembrane segment at 672–692 (PSVSVVQILAFILIRNIPGYA) threads the bilayer. The Cytoplasmic portion of the chain corresponds to 693–698 (RSVYSS). A helical membrane pass occupies residues 699–719 (FFAWFGKISLELFICQYHIWL). The Lumenal portion of the chain corresponds to 720-725 (AADTRG). A helical transmembrane segment spans residues 726-746 (ILVLIPGNPMLNIIVSTFIFV). Residues 747–770 (CVAHEISQITNDLAQIIIPKDNSS) are Cytoplasmic-facing. Residues 771–791 (LLKRLACIAAFFCGLLILSSI) traverse the membrane as a helical segment. At 792-797 (QDKSKH) the chain is on the lumenal side.

This sequence belongs to the PC-esterase family. CASD1 subfamily. N-glycosylated. Highly expressed in peripheral B lymphocytes.

It localises to the golgi apparatus membrane. The catalysed reaction is CMP-N-acetyl-beta-neuraminate + acetyl-CoA = CMP-N-acetyl-9-O-acetyl-beta-neuraminate + CoA. It catalyses the reaction a ganglioside GD3 (d18:1(4E)) + acetyl-CoA = a ganglioside Ac-O-7-GD3(d18:1(4E)) + CoA. It carries out the reaction CMP-N-acetyl-beta-neuraminate + acetyl-CoA = CMP-N-acetyl-7-O-acetyl-beta-neuraminate + CoA. In terms of biological role, key enzyme in the biosynthesis of O-acetylated (O-Ac) sialoglycans such as gangliosides O-AcGD3 and O-AcGD2, which affect various processes such as cell-cell interactions, host-pathogen recognition. Catalyzes the transfer of an acetyl group from a donor, the acetyl-coenzyme-A molecule (acetyl-CoA), to the C7/8/9 OH-position of a sialic acid residue. The primary site of O-acetyl group transfer on sialic acid seems to depend on cell type and can be C7, from which the O-acetyl group could subsequently migrate to the C8 and then to the C9 position, or at C9 with possibility of migrating to the C8 and then to the C7 position. Together with ST8SIA1 (GD3 synthase) it increases the levels of ganglioside Ac-O-7-GD3. Can transfer the acetyl group from acetyl-CoA to free sialate (N-acetylneuraminate, Neu5Ac) in vitro, but has preferred substrate specificity for CMP-activated sialate (CMP-Neu5Ac), resulting in the formation of 9-O-acetylated CMP-Neu5Ac (CMP-Neu5,9Ac2). CMP-Neu5,9Ac2 may be used by sialyltransferases as a sialate donor for glycoconjugate acceptors such as ganglioside GD3. O-acetylation at position C9 of ganglioside GD3 can counteract the pro-apoptotic effects of the ganglioside GD3 in tumor cells. In Homo sapiens (Human), this protein is N-acetylneuraminate (7)9-O-acetyltransferase.